We begin with the raw amino-acid sequence, 429 residues long: Serine--tRNA ligase (429 aa).

229–231 (TAE) lines the L-serine pocket. 260 to 262 (RSE) provides a ligand contact to ATP. An L-serine-binding site is contributed by glutamate 283. 347–350 (EISS) provides a ligand contact to ATP. Serine 383 lines the L-serine pocket.

This sequence belongs to the class-II aminoacyl-tRNA synthetase family. Type-1 seryl-tRNA synthetase subfamily. In terms of assembly, homodimer. The tRNA molecule binds across the dimer.

It is found in the cytoplasm. The enzyme catalyses tRNA(Ser) + L-serine + ATP = L-seryl-tRNA(Ser) + AMP + diphosphate + H(+). It carries out the reaction tRNA(Sec) + L-serine + ATP = L-seryl-tRNA(Sec) + AMP + diphosphate + H(+). It functions in the pathway aminoacyl-tRNA biosynthesis; selenocysteinyl-tRNA(Sec) biosynthesis; L-seryl-tRNA(Sec) from L-serine and tRNA(Sec): step 1/1. In terms of biological role, catalyzes the attachment of serine to tRNA(Ser). Is also able to aminoacylate tRNA(Sec) with serine, to form the misacylated tRNA L-seryl-tRNA(Sec), which will be further converted into selenocysteinyl-tRNA(Sec). This is Serine--tRNA ligase from Orientia tsutsugamushi (strain Boryong) (Rickettsia tsutsugamushi).